Reading from the N-terminus, the 277-residue chain is Ribosomal RNA small subunit methyltransferase G (277 aa).

S-adenosyl-L-methionine-binding positions include glycine 128, phenylalanine 133, 188–189, and arginine 198; that span reads SE.

Belongs to the methyltransferase superfamily. RNA methyltransferase RsmG family.

It localises to the cytoplasm. The catalysed reaction is guanosine(527) in 16S rRNA + S-adenosyl-L-methionine = N(7)-methylguanosine(527) in 16S rRNA + S-adenosyl-L-homocysteine. Its function is as follows. Specifically methylates the N7 position of guanine in position 527 of 16S rRNA. In Nitrobacter winogradskyi (strain ATCC 25391 / DSM 10237 / CIP 104748 / NCIMB 11846 / Nb-255), this protein is Ribosomal RNA small subunit methyltransferase G.